Reading from the N-terminus, the 205-residue chain is UPF0056 membrane protein MJ1677 (205 aa).

The next 6 helical transmembrane spans lie at Ile7–Ile27, Ala49–Ile69, Ser70–Val90, Ile112–Met132, Phe145–Ala165, and Gly185–Leu205.

Belongs to the UPF0056 (MarC) family.

The protein localises to the cell membrane. The chain is UPF0056 membrane protein MJ1677 from Methanocaldococcus jannaschii (strain ATCC 43067 / DSM 2661 / JAL-1 / JCM 10045 / NBRC 100440) (Methanococcus jannaschii).